We begin with the raw amino-acid sequence, 280 residues long: Eukaryotic translation initiation factor 3 subunit F-1 (280 aa).

In terms of domain architecture, MPN spans 8–138 (VRVHPVVLFQ…LRAYVCIQLG (131 aa)).

This sequence belongs to the eIF-3 subunit F family. In terms of assembly, component of the eukaryotic translation initiation factor 3 (eIF-3) complex. The eIF-3 complex interacts with pix.

The protein resides in the cytoplasm. Functionally, component of the eukaryotic translation initiation factor 3 (eIF-3) complex, which is involved in protein synthesis of a specialized repertoire of mRNAs and, together with other initiation factors, stimulates binding of mRNA and methionyl-tRNAi to the 40S ribosome. The eIF-3 complex specifically targets and initiates translation of a subset of mRNAs involved in cell proliferation. The polypeptide is Eukaryotic translation initiation factor 3 subunit F-1 (Drosophila erecta (Fruit fly)).